The chain runs to 364 residues: Molybdenum import ATP-binding protein ModC (364 aa).

The ABC transporter domain occupies 1 to 229 (MLLIDIKKQL…PLMRPWLNAS (229 aa)). 31–38 (GRSGAGKS) is an ATP binding site. The Mop domain occupies 293-360 (HSSIRNILPV…IKGVSVTQSD (68 aa)).

Belongs to the ABC transporter superfamily. Molybdate importer (TC 3.A.1.8) family. The complex is composed of two ATP-binding proteins (ModC), two transmembrane proteins (ModB) and a solute-binding protein (ModA).

The protein localises to the cell inner membrane. The enzyme catalyses molybdate(out) + ATP + H2O = molybdate(in) + ADP + phosphate + H(+). Part of the ABC transporter complex ModABC involved in molybdenum import. Responsible for energy coupling to the transport system. The polypeptide is Molybdenum import ATP-binding protein ModC (Aliivibrio fischeri (strain ATCC 700601 / ES114) (Vibrio fischeri)).